The following is a 386-amino-acid chain: Caspase-12 (386 aa).

Positions 1–91 constitute a CARD domain; that stretch reads MAGKRQSQDP…LLSLKSHAEN (91 aa). Residue Ser84 is modified to Phosphoserine. Residues His218 and Cys266 contribute to the active site.

Belongs to the peptidase C14A family. As to quaternary structure, heterotetramer that consists of two anti-parallel arranged heterodimers, each one formed by two subunits (Potential). May interact with TRAF2.

Its function is as follows. Involved in the activation cascade of caspases responsible for apoptosis execution. The chain is Caspase-12 from Canis lupus familiaris (Dog).